Here is a 167-residue protein sequence, read N- to C-terminus: RNA pyrophosphohydrolase (167 aa).

The Nudix hydrolase domain occupies 8 to 158 (PYRTCVGMML…KRPVYERVVK (151 aa)). Positions 47–68 (GGVDPGEDTWEAAKRELYEETN) match the Nudix box motif.

Belongs to the Nudix hydrolase family. RppH subfamily. A divalent metal cation is required as a cofactor.

Its function is as follows. Accelerates the degradation of transcripts by removing pyrophosphate from the 5'-end of triphosphorylated RNA, leading to a more labile monophosphorylated state that can stimulate subsequent ribonuclease cleavage. The protein is RNA pyrophosphohydrolase of Rhodopseudomonas palustris (strain HaA2).